The chain runs to 205 residues: Protein-L-isoaspartate O-methyltransferase (205 aa).

The active site involves S56.

It belongs to the methyltransferase superfamily. L-isoaspartyl/D-aspartyl protein methyltransferase family.

Its subcellular location is the cytoplasm. The catalysed reaction is [protein]-L-isoaspartate + S-adenosyl-L-methionine = [protein]-L-isoaspartate alpha-methyl ester + S-adenosyl-L-homocysteine. In terms of biological role, catalyzes the methyl esterification of L-isoaspartyl residues in peptides and proteins that result from spontaneous decomposition of normal L-aspartyl and L-asparaginyl residues. It plays a role in the repair and/or degradation of damaged proteins. This chain is Protein-L-isoaspartate O-methyltransferase, found in Pyrobaculum aerophilum (strain ATCC 51768 / DSM 7523 / JCM 9630 / CIP 104966 / NBRC 100827 / IM2).